Reading from the N-terminus, the 561-residue chain is Methyl-accepting chemotaxis protein CtpM (561 aa).

Residues 1 to 11 (MMRLTLKSKVL) lie on the Cytoplasmic side of the membrane. The helical transmembrane segment at 12–32 (LLAMVPVLLFALVLSGGAVLI) threads the bilayer. Residues 33 to 205 (LKKQADAEVK…KQDIDERIGT (173 aa)) lie on the Periplasmic side of the membrane. The helical transmembrane segment at 206–226 (LIASIVGIAGVLLVVLLVIGL) threads the bilayer. Residues 227–561 (AVANAMLRPL…LGRLVGQFRI (335 aa)) are Cytoplasmic-facing. The HAMP domain occupies 230-284 (NAMLRPLHQIRQNLDDIAAGEGDLTRRLPVTSYDELGELAGSFNRFVEKIHGLVR). In terms of domain architecture, Methyl-accepting transducer spans 289–525 (MTGDLKQLVE…EINRSVHQIA (237 aa)). The segment at 333-357 (HEVAQSAQRAAEAAQQTDHEGQAAK) is disordered. A compositionally biased stretch (low complexity) spans 336–348 (AQSAQRAAEAAQQ).

The protein belongs to the methyl-accepting chemotaxis (MCP) protein family. In terms of assembly, homodimer. The ligand-binding domain (LBD) is dimeric in the presence and the absence of ligands.

The protein localises to the cell inner membrane. Its function is as follows. Chemotactic-signal transducers respond to changes in the concentration of attractants and repellents in the environment, transduce a signal from the outside to the inside of the cell, and facilitate sensory adaptation through the variation of the level of methylation. Directly recognizes five C4-dicarboxylic acids: L-malic, citramalic, citraconic, bromosuccinic and methylsuccinic acids. Three of the identified ligands act as chemoattractants (L-malic, D,L-bromosuccinic and L-citramalic acids) whereas two of them (L-methylsuccinic and citraconic acids) behave as antagonists by inhibiting the downstream chemotaxis signaling cascade. Antagonists compete with chemoattractants, thereby decreasing the affinity for chemoattractants and the subsequent chemotactic response. Acts through the che chemosensory pathway. This Pseudomonas aeruginosa (strain ATCC 15692 / DSM 22644 / CIP 104116 / JCM 14847 / LMG 12228 / 1C / PRS 101 / PAO1) protein is Methyl-accepting chemotaxis protein CtpM.